The sequence spans 248 residues: Probable transcriptional regulatory protein Nwi_2729 (248 aa).

The segment at Met-1–Lys-21 is disordered.

Belongs to the TACO1 family.

The protein localises to the cytoplasm. The chain is Probable transcriptional regulatory protein Nwi_2729 from Nitrobacter winogradskyi (strain ATCC 25391 / DSM 10237 / CIP 104748 / NCIMB 11846 / Nb-255).